The primary structure comprises 485 residues: Probable RNA-binding protein 46 (485 aa).

RRM domains lie at 61–139 (CEVF…VSLD), 141–223 (CRLF…WADP), and 236–308 (KVLY…LAKP).

In terms of assembly, interacts with YTHDC2, MEIOC, MOV10, CNOT6L, DDX4, UPF1 and PABPC1.

The protein localises to the cytoplasm. In terms of biological role, essential for male and female fertility, playing a crucial role in regulating germ cell development by ensuring the proper progression of meiosis prophase I. Regulates mitotic-to-meiotic transition in spermatogenesis by forming a complex with MEIOC and YTHDC2 which recognizes and down-regulates mitotic transcripts for a successful meiotic entry. Required for normal synaptonemal complex formation during meiosis, binding meiotic cohesin subunit mRNAs containing GCCUAU/GUUCGA motifs in their 3'UTRs regions and positively regulating their translation. Required for spermatogonial differentiation in both developing and adult testis. The polypeptide is Probable RNA-binding protein 46 (RBM46) (Macaca fascicularis (Crab-eating macaque)).